Consider the following 371-residue polypeptide: tRNA-specific 2-thiouridylase MnmA (371 aa).

ATP-binding positions include G12 to S19 and M38. The interval N98–D100 is interaction with target base in tRNA. C103 functions as the Nucleophile in the catalytic mechanism. C103 and C200 are disulfide-bonded. An ATP-binding site is contributed by G128. Positions K150–Q152 are interaction with tRNA. Residue C200 is the Cysteine persulfide intermediate of the active site. An interaction with tRNA region spans residues R312–Y313.

It belongs to the MnmA/TRMU family. Interacts with TusE.

The protein localises to the cytoplasm. It catalyses the reaction S-sulfanyl-L-cysteinyl-[protein] + uridine(34) in tRNA + AH2 + ATP = 2-thiouridine(34) in tRNA + L-cysteinyl-[protein] + A + AMP + diphosphate + H(+). In terms of biological role, catalyzes the 2-thiolation of uridine at the wobble position (U34) of tRNA(Lys), tRNA(Glu) and tRNA(Gln), leading to the formation of s(2)U34, the first step of tRNA-mnm(5)s(2)U34 synthesis. Sulfur is provided by IscS, via a sulfur-relay system. Binds ATP and its substrate tRNAs. The protein is tRNA-specific 2-thiouridylase MnmA of Yersinia pseudotuberculosis serotype O:1b (strain IP 31758).